Here is a 740-residue protein sequence, read N- to C-terminus: Catalase-peroxidase (740 aa).

Residues 1–14 are compositionally biased toward basic and acidic residues; the sequence is MTENHDAIVTDAKS. Residues 1 to 21 are disordered; that stretch reads MTENHDAIVTDAKSEGSGGCP. Residues 108–231 constitute a cross-link (tryptophyl-tyrosyl-methioninium (Trp-Tyr) (with M-257)); it reads WHSAGTYRIS…LGAVQMGLIY (124 aa). The active-site Proton acceptor is H109. Residues 231–257 constitute a cross-link (tryptophyl-tyrosyl-methioninium (Tyr-Met) (with W-108)); it reads YVNPEGPNGNPDPIAAARDIRETFRRM. Position 272 (H272) interacts with heme b.

Belongs to the peroxidase family. Peroxidase/catalase subfamily. In terms of assembly, homodimer. It depends on heme b as a cofactor. Formation of the three residue Trp-Tyr-Met cross-link is important for the catalase, but not the peroxidase activity of the enzyme.

The catalysed reaction is H2O2 + AH2 = A + 2 H2O. The enzyme catalyses 2 H2O2 = O2 + 2 H2O. Functionally, bifunctional enzyme with both catalase and broad-spectrum peroxidase activity. This chain is Catalase-peroxidase, found in Streptomyces reticuli.